A 375-amino-acid polypeptide reads, in one-letter code: MSKGKIIVAMSGGVDSAVTAGLLMEDGYEVIGVNLRTWEYEAPACDTTKKSCCSPEDIRDARDVGISLKIPFYVIKMEKVFQEKVIDRFIEDYQHGKTPNPCVECNTFVKFGALFEKAKALGIDKIATGHYARIARNGERYAIANGIDVGKNQAYYLYGLSQENLKNVIFPLGEMTKPEVRQIARRMGLPVADKSESQEICFIPENDYRKFLEKKNVEFTPGFFKLKDGRIVGKHKGRENFTIGQRKGLGIAWKNPLYVISIEDDGSVILGEENETYNESFSVIDLNFQGLAPLNEGESLECRVQVRYRHIPIRCKITKMKEGLIVHPLEDVRGVTPGQSAVFYPLDSDYLLLGGIISKGSIQMRVAEPAISVLN.

ATP is bound by residues 9–16 (AMSGGVDS) and Leu-35. The active-site Nucleophile is Cys-105. Residues Cys-105 and Cys-201 are joined by a disulfide bond. Gly-129 contacts ATP. Residues 151–153 (KNQ) form an interaction with tRNA region. The active-site Cysteine persulfide intermediate is Cys-201. The interval 307–308 (RY) is interaction with tRNA.

This sequence belongs to the MnmA/TRMU family.

The protein resides in the cytoplasm. It carries out the reaction S-sulfanyl-L-cysteinyl-[protein] + uridine(34) in tRNA + AH2 + ATP = 2-thiouridine(34) in tRNA + L-cysteinyl-[protein] + A + AMP + diphosphate + H(+). Catalyzes the 2-thiolation of uridine at the wobble position (U34) of tRNA, leading to the formation of s(2)U34. This is tRNA-specific 2-thiouridylase MnmA from Leptospira interrogans serogroup Icterohaemorrhagiae serovar copenhageni (strain Fiocruz L1-130).